The chain runs to 336 residues: Holliday junction branch migration complex subunit RuvB (336 aa).

The segment at Met-1–Tyr-182 is large ATPase domain (RuvB-L). Residues Leu-21, Arg-22, Gly-63, Lys-66, Thr-67, Ser-68, Glu-129 to Phe-131, Arg-172, Tyr-182, and Arg-219 contribute to the ATP site. Thr-67 lines the Mg(2+) pocket. Residues Ser-183–Gly-253 form a small ATPAse domain (RuvB-S) region. The head domain (RuvB-H) stretch occupies residues Glu-256 to Phe-336. Residues Arg-310 and Arg-315 each coordinate DNA.

It belongs to the RuvB family. Homohexamer. Forms an RuvA(8)-RuvB(12)-Holliday junction (HJ) complex. HJ DNA is sandwiched between 2 RuvA tetramers; dsDNA enters through RuvA and exits via RuvB. An RuvB hexamer assembles on each DNA strand where it exits the tetramer. Each RuvB hexamer is contacted by two RuvA subunits (via domain III) on 2 adjacent RuvB subunits; this complex drives branch migration. In the full resolvosome a probable DNA-RuvA(4)-RuvB(12)-RuvC(2) complex forms which resolves the HJ.

It is found in the cytoplasm. It catalyses the reaction ATP + H2O = ADP + phosphate + H(+). Its function is as follows. The RuvA-RuvB-RuvC complex processes Holliday junction (HJ) DNA during genetic recombination and DNA repair, while the RuvA-RuvB complex plays an important role in the rescue of blocked DNA replication forks via replication fork reversal (RFR). RuvA specifically binds to HJ cruciform DNA, conferring on it an open structure. The RuvB hexamer acts as an ATP-dependent pump, pulling dsDNA into and through the RuvAB complex. RuvB forms 2 homohexamers on either side of HJ DNA bound by 1 or 2 RuvA tetramers; 4 subunits per hexamer contact DNA at a time. Coordinated motions by a converter formed by DNA-disengaged RuvB subunits stimulates ATP hydrolysis and nucleotide exchange. Immobilization of the converter enables RuvB to convert the ATP-contained energy into a lever motion, pulling 2 nucleotides of DNA out of the RuvA tetramer per ATP hydrolyzed, thus driving DNA branch migration. The RuvB motors rotate together with the DNA substrate, which together with the progressing nucleotide cycle form the mechanistic basis for DNA recombination by continuous HJ branch migration. Branch migration allows RuvC to scan DNA until it finds its consensus sequence, where it cleaves and resolves cruciform DNA. This Helicobacter pylori (strain G27) protein is Holliday junction branch migration complex subunit RuvB.